The chain runs to 385 residues: uncharacterized protein (385 aa).

Belongs to the mycobacterial PPE family.

This is an uncharacterized protein from Mycobacterium tuberculosis (strain CDC 1551 / Oshkosh).